A 145-amino-acid polypeptide reads, in one-letter code: Basic phospholipase A2 PC16 (145 aa).

The signal sequence occupies residues 1-21 (MYPAHLLLLLAVCVSLLGASA). The propeptide occupies 22 to 27 (IPPLPL). Intrachain disulfides connect cysteine 38-cysteine 98, cysteine 54-cysteine 144, cysteine 56-cysteine 72, cysteine 71-cysteine 125, cysteine 78-cysteine 118, cysteine 87-cysteine 111, and cysteine 105-cysteine 116. Ca(2+)-binding residues include tyrosine 55, glycine 57, and glycine 59. Histidine 75 is a catalytic residue. Aspartate 76 lines the Ca(2+) pocket. Aspartate 119 is an active-site residue.

This sequence belongs to the phospholipase A2 family. Group I subfamily. D49 sub-subfamily. Ca(2+) serves as cofactor.

It is found in the secreted. The enzyme catalyses a 1,2-diacyl-sn-glycero-3-phosphocholine + H2O = a 1-acyl-sn-glycero-3-phosphocholine + a fatty acid + H(+). Its function is as follows. PLA2 catalyzes the calcium-dependent hydrolysis of the 2-acyl groups in 3-sn-phosphoglycerides. The polypeptide is Basic phospholipase A2 PC16 (Laticauda laticaudata (Blue-ringed sea krait)).